We begin with the raw amino-acid sequence, 323 residues long: Arginase-1 (323 aa).

Residues 1 to 27 form a disordered region; sequence MSSKPKSLEIIGAPFSKGQPRGGVEKG. Ser-7 is subject to Phosphoserine. Lys-17 carries the post-translational modification N6-succinyllysine. Ser-62 and Ser-72 each carry phosphoserine. Lys-75 bears the N6-succinyllysine mark. Residues His-101, Asp-124, His-126, and Asp-128 each coordinate Mn(2+). Substrate-binding positions include 126–130 and 137–139; these read HTDIN and SGN. A Phosphoserine modification is found at Ser-163. Residue Asp-183 participates in substrate binding. Ser-217 bears the Phosphoserine mark. Asp-232 and Asp-234 together coordinate Mn(2+). Substrate-binding residues include Thr-246 and Glu-277. Thr-281 bears the Phosphothreonine mark.

The protein belongs to the arginase family. Homotrimer. Interacts with CMTM6. Requires Mn(2+) as cofactor. As to expression, expressed in macrophages. Expressed in precursor and mature group 2 innate lymphoid cells (ILC2s). Expressed in lung tumor-associated myeloid cells. Expressed in lung tumor-infiltrating dendritic cells.

The protein localises to the cytoplasm. Its subcellular location is the cytoplasmic granule. The enzyme catalyses L-arginine + H2O = urea + L-ornithine. Its pathway is nitrogen metabolism; urea cycle; L-ornithine and urea from L-arginine: step 1/1. Functionally, key element of the urea cycle converting L-arginine to urea and L-ornithine, which is further metabolized into metabolites proline and polyamides that drive collagen synthesis and bioenergetic pathways critical for cell proliferation, respectively; the urea cycle takes place primarily in the liver and, to a lesser extent, in the kidneys. In terms of biological role, functions in L-arginine homeostasis in nonhepatic tissues characterized by the competition between nitric oxide synthase (NOS) and arginase for the available intracellular substrate arginine. Arginine metabolism is a critical regulator of innate and adaptive immune responses. Involved in an antimicrobial effector pathway in polymorphonuclear granulocytes (PMN). Upon PMN cell death is liberated from the phagolysosome and depletes arginine in the microenvironment leading to suppressed T cell and natural killer (NK) cell proliferation and cytokine secretion. In group 2 innate lymphoid cells (ILC2s) promotes acute type 2 inflammation in the lung and is involved in optimal ILC2 proliferation but not survival. Plays a role in the immune response of alternatively activated or M2 macrophages in processes such as wound healing and tissue regeneration, immune defense against multicellular pathogens and parasites, and immune suppression and allergic inflammation; the regulatory outcome seems to be organ specific. In tumor-infiltrating dendritic cells (DCs) and myeloid-derived suppressor cells (MDSCs) plays a role in suppression of T cell-mediated antitumor immunity. In Mus musculus (Mouse), this protein is Arginase-1 (Arg1).